Reading from the N-terminus, the 739-residue chain is Tegument protein UL47 (739 aa).

The span at 1-13 (MDAARDGRPERRR) shows a compositional bias: basic and acidic residues. 2 disordered regions span residues 1 to 123 (MDAA…QDYL) and 154 to 198 (QFPP…DDAA). A Nuclear localization signal motif is present at residues 10-30 (ERRRAVSGTYRTHPFQRPSAR). The segment covering 28-53 (SARRSAGRPARCGRRGRGAPRVRRPR) has biased composition (basic residues). Acidic residues predominate over residues 62 to 87 (EDTSEDENVYDYIDGDSSDSADDYDS). Positions 94–121 (RGPNHGAGDAMDTDAPPERAPEGGAPQD) match the Nuclear export signal motif. A Nuclear export signal motif is present at residues 483 to 493 (LSAYLTLFVAL).

The protein belongs to the alphaherpesvirinae HHV-1 UL47 family. In terms of assembly, interacts with US3 kinase. Interacts with UL31 and UL34; these interactions seem important for efficient virion nuclear egress. Interacts with UL41/VHS. Interacts with host DDB1. In terms of processing, monoubiquitinated. Phosphorylated by US3. This phosphorylation is required for proper nuclear localization.

It localises to the virion tegument. It is found in the host nucleus. The protein resides in the host cytoplasm. Its function is as follows. Tegument protein that can bind to various RNA transcripts. Plays a role in the attenuation of selective viral and cellular mRNA degradation by modulating the activity of host shutoff RNase UL41/VHS. Also plays a role in the primary envelopment of virions in the perinuclear space, probably by interacting with two nuclear egress proteins UL31 and UL34. The protein is Tegument protein UL47 of Bovine herpesvirus 1.1 (strain Cooper) (BoHV-1).